Here is a 69-residue protein sequence, read N- to C-terminus: Defensin-like protein 166 (69 aa).

Positions 1–15 (MIIVIIFLVIYFNNQ) are cleaved as a signal peptide. Intrachain disulfides connect cysteine 19-cysteine 68, cysteine 24-cysteine 44, cysteine 29-cysteine 62, and cysteine 33-cysteine 64.

Belongs to the DEFL family.

Its subcellular location is the secreted. This chain is Defensin-like protein 166, found in Arabidopsis thaliana (Mouse-ear cress).